Consider the following 286-residue polypeptide: MKAKPLSQDPGSKRYAYRINKEENRKELKHVKINESSLVQEGQKIDLPKKRYYRQRAHSNPFSDHQLEYPVSPQDMDWSKLYPYYKNAENGQMTKKVTIADIGCGFGGLMIDLSPAFPEDLILGMEIRVQVTNYVEDRIIALRNNTASKHGFQNINVLRGNAMKFLPNFFEKGQLSKMFFCFPDPHFKQRKHKARIITNTLLSEYAYVLKEGGVVYTITDVKDLHEWMVKHLEEHPLFERLSKEWEENDECVQIMRNATEEGKKVERKKGDKFVACFTRLPTPAIL.

S7 and S59 each carry phosphoserine. S-adenosyl-L-methionine is bound by residues G103, 126–127 (EI), 161–162 (NA), and C181. Residue D184 is part of the active site. 259 to 261 (TEE) contributes to the S-adenosyl-L-methionine binding site.

It belongs to the class I-like SAM-binding methyltransferase superfamily. TrmB family. As to quaternary structure, forms a complex with TRM82.

The protein localises to the nucleus. It catalyses the reaction guanosine(46) in tRNA + S-adenosyl-L-methionine = N(7)-methylguanosine(46) in tRNA + S-adenosyl-L-homocysteine. The protein operates within tRNA modification; N(7)-methylguanine-tRNA biosynthesis. Methyltransferase that catalyzes the formation of N(7)-methylguanine at position 46 (m7G46) in tRNA, a modification required to maintain stability of tRNAs; its absence resulting in tRNA decay. Both the D-stem and T-stem structures of tRNAs are required for efficient methyltransferase activity. This chain is tRNA (guanine-N(7)-)-methyltransferase, found in Saccharomyces cerevisiae (strain YJM789) (Baker's yeast).